A 202-amino-acid polypeptide reads, in one-letter code: Odorant-binding protein 59a (202 aa).

The first 20 residues, 1 to 20 (MKQLIFLLICLSCGTCSIYA), serve as a signal peptide directing secretion. Residues 43-53 (HRQDEDEDRGR) show a composition bias toward basic and acidic residues. A disordered region spans residues 43-105 (HRQDEDEDRG…QSDGRNHTSN (63 aa)). The span at 54-65 (GGQGRQGNGYEY) shows a compositional bias: gly residues.

Belongs to the PBP/GOBP family. Expressed in non-neuronal cells in hygrosensitive sensilla in the second chamber of the sacculus of the antenna third segment (at protein level).

Its subcellular location is the secreted. Its function is as follows. Odorant-binding protein required for hygrotaxis behavior in humidity-detecting sensilla. This Drosophila melanogaster (Fruit fly) protein is Odorant-binding protein 59a.